The primary structure comprises 1700 residues: A-kinase anchor protein SPHKAP (1700 aa).

Disordered stretches follow at residues 364–385 (SNLN…QDGE), 742–778 (IRRR…SNSH), and 793–885 (SKQD…NTQE). Over residues 768-778 (SSSSSPLSNSH) the composition is skewed to low complexity. The span at 822-831 (DSSTATTSSK) shows a compositional bias: polar residues. Basic and acidic residues predominate over residues 839 to 855 (AGEDTKSPHHSENECRA). Residues 857 to 873 (SEGQRSPTVSQSRSGSQ) show a composition bias toward polar residues. Positions 929 to 946 (FAEELADTVVSMATEIAA) are PKA-RII subunit binding domain. Positions 980–1006 (KRKKESQGSGTAVRKHKPPRLSEIKRK) are disordered. Phosphoserine is present on residues Ser1025, Ser1085, Ser1107, Ser1120, Ser1121, Ser1124, Ser1259, and Ser1288. Disordered stretches follow at residues 1374 to 1414 (DSVT…PVPI), 1481 to 1535 (IHSD…DTSS), and 1585 to 1604 (GQSE…TASP). The segment covering 1383–1398 (PVSSLSKTASLTNHSP) has biased composition (polar residues). The span at 1586-1604 (QSESTEAPASGPPTGTASP) shows a compositional bias: polar residues.

The protein belongs to the AKAP110 family. As to quaternary structure, interacts (via the PKA-RII subunit binding domain) with the RI subunit of PKA. Interacts with SPHK1; the interaction greatly reduces SPHK1 activity. Highly expressed in heart. Both isoforms abundantly expressed in ventricle. Also expressed in spleen, ovary and brain.

It localises to the cytoplasm. Its function is as follows. Anchoring protein that binds preferentially to the type I regulatory subunit of c-AMP-dependent protein kinase (PKA type I) and targets it to distinct subcellular compartments. May act as a converging factor linking cAMP and sphingosine signaling pathways. Plays a regulatory role in the modulation of SPHK1. The sequence is that of A-kinase anchor protein SPHKAP (SPHKAP) from Homo sapiens (Human).